A 283-amino-acid chain; its full sequence is Elongation factor Ts (283 aa).

The involved in Mg(2+) ion dislocation from EF-Tu stretch occupies residues 79–82 (TDFV).

Belongs to the EF-Ts family.

The protein localises to the cytoplasm. Associates with the EF-Tu.GDP complex and induces the exchange of GDP to GTP. It remains bound to the aminoacyl-tRNA.EF-Tu.GTP complex up to the GTP hydrolysis stage on the ribosome. The polypeptide is Elongation factor Ts (Shewanella denitrificans (strain OS217 / ATCC BAA-1090 / DSM 15013)).